We begin with the raw amino-acid sequence, 934 residues long: DNA topoisomerase 1 (934 aa).

A disordered region spans residues 1–20; sequence MADPKTKGRGSGGNGSGRRL. One can recognise a Toprim domain in the interval 18–142; the sequence is RRLVIVESPT…VKRMVFHEIT (125 aa). Residues E24 and D111 each coordinate Mg(2+). Residues 157 to 616 enclose the Topo IA-type catalytic domain; the sequence is DIDLVDAQET…FYFGGDHGVP (460 aa). Residues 191 to 196 are interaction with DNA; the sequence is SAGRVQ. Residue Y342 is the O-(5'-phospho-DNA)-tyrosine intermediate of the active site. 3 disordered regions span residues 746 to 765, 842 to 892, and 905 to 934; these read AAQG…RTGS, KRRG…KGDD, and LADR…AKRD. Basic residues predominate over residues 911 to 934; it reads RGPAKRPARKAARKVPAKKAAKRD.

It belongs to the type IA topoisomerase family. As to quaternary structure, monomer. The cofactor is Mg(2+).

The catalysed reaction is ATP-independent breakage of single-stranded DNA, followed by passage and rejoining.. In terms of biological role, releases the supercoiling and torsional tension of DNA, which is introduced during the DNA replication and transcription, by transiently cleaving and rejoining one strand of the DNA duplex. Introduces a single-strand break via transesterification at a target site in duplex DNA. The scissile phosphodiester is attacked by the catalytic tyrosine of the enzyme, resulting in the formation of a DNA-(5'-phosphotyrosyl)-enzyme intermediate and the expulsion of a 3'-OH DNA strand. The free DNA strand then undergoes passage around the unbroken strand, thus removing DNA supercoils. Finally, in the religation step, the DNA 3'-OH attacks the covalent intermediate to expel the active-site tyrosine and restore the DNA phosphodiester backbone. The chain is DNA topoisomerase 1 from Mycobacterium bovis (strain ATCC BAA-935 / AF2122/97).